Consider the following 513-residue polypeptide: GMP synthase [glutamine-hydrolyzing] (513 aa).

A Glutamine amidotransferase type-1 domain is found at 8–198 (KIIVLDYGSQ…ALNICGAKGN (191 aa)). C85 serves as the catalytic Nucleophile. Catalysis depends on residues H172 and E174. Positions 199–388 (WSMENFIDMQ…LGMPDEIVWR (190 aa)) constitute a GMPS ATP-PPase domain. 226–232 (SGGVDSS) contributes to the ATP binding site.

Homodimer.

It catalyses the reaction XMP + L-glutamine + ATP + H2O = GMP + L-glutamate + AMP + diphosphate + 2 H(+). The protein operates within purine metabolism; GMP biosynthesis; GMP from XMP (L-Gln route): step 1/1. Its function is as follows. Catalyzes the synthesis of GMP from XMP. The polypeptide is GMP synthase [glutamine-hydrolyzing] (guaA) (Lactococcus lactis subsp. lactis (strain IL1403) (Streptococcus lactis)).